An 860-amino-acid chain; its full sequence is Leucine--tRNA ligase (860 aa).

The 'HIGH' region signature appears at 42–52 (PYPSGRLHMGH). The 'KMSKS' region signature appears at 619–623 (KMSKS). ATP is bound at residue lysine 622.

Belongs to the class-I aminoacyl-tRNA synthetase family.

The protein resides in the cytoplasm. It catalyses the reaction tRNA(Leu) + L-leucine + ATP = L-leucyl-tRNA(Leu) + AMP + diphosphate. The chain is Leucine--tRNA ligase from Salmonella paratyphi A (strain ATCC 9150 / SARB42).